The following is a 220-amino-acid chain: Probable chemoreceptor glutamine deamidase CheD (220 aa).

It belongs to the CheD family.

It carries out the reaction L-glutaminyl-[protein] + H2O = L-glutamyl-[protein] + NH4(+). Functionally, probably deamidates glutamine residues to glutamate on methyl-accepting chemotaxis receptors (MCPs), playing an important role in chemotaxis. The chain is Probable chemoreceptor glutamine deamidase CheD from Cupriavidus metallidurans (strain ATCC 43123 / DSM 2839 / NBRC 102507 / CH34) (Ralstonia metallidurans).